Here is a 360-residue protein sequence, read N- to C-terminus: Peptide chain release factor 1 (360 aa).

N5-methylglutamine is present on glutamine 234.

It belongs to the prokaryotic/mitochondrial release factor family. Methylated by PrmC. Methylation increases the termination efficiency of RF1.

It localises to the cytoplasm. Its function is as follows. Peptide chain release factor 1 directs the termination of translation in response to the peptide chain termination codons UAG and UAA. This is Peptide chain release factor 1 from Clostridium perfringens (strain 13 / Type A).